Reading from the N-terminus, the 225-residue chain is Uracil-DNA glycosylase (225 aa).

Aspartate 65 serves as the catalytic Proton acceptor.

It belongs to the uracil-DNA glycosylase (UDG) superfamily. UNG family.

The protein resides in the cytoplasm. It catalyses the reaction Hydrolyzes single-stranded DNA or mismatched double-stranded DNA and polynucleotides, releasing free uracil.. Its function is as follows. Excises uracil residues from the DNA which can arise as a result of misincorporation of dUMP residues by DNA polymerase or due to deamination of cytosine. The polypeptide is Uracil-DNA glycosylase (Alkaliphilus oremlandii (strain OhILAs) (Clostridium oremlandii (strain OhILAs))).